A 652-amino-acid polypeptide reads, in one-letter code: DNA mismatch repair protein MutL (652 aa).

Disordered stretches follow at residues 357 to 377 (LGAN…NYPS) and 425 to 457 (PDKG…NSTD). Residues 365 to 375 (SHSSNTPTLNY) are compositionally biased toward polar residues.

The protein belongs to the DNA mismatch repair MutL/HexB family.

In terms of biological role, this protein is involved in the repair of mismatches in DNA. It is required for dam-dependent methyl-directed DNA mismatch repair. May act as a 'molecular matchmaker', a protein that promotes the formation of a stable complex between two or more DNA-binding proteins in an ATP-dependent manner without itself being part of a final effector complex. In Colwellia psychrerythraea (strain 34H / ATCC BAA-681) (Vibrio psychroerythus), this protein is DNA mismatch repair protein MutL.